The following is a 63-amino-acid chain: Large ribosomal subunit protein bL28 (63 aa).

A disordered region spans residues 1–21 (MSRRDDLTGKGPMFGNNRSHA).

This sequence belongs to the bacterial ribosomal protein bL28 family.

This chain is Large ribosomal subunit protein bL28, found in Mycoplasmopsis pulmonis (strain UAB CTIP) (Mycoplasma pulmonis).